A 715-amino-acid polypeptide reads, in one-letter code: Fatty acid oxidation complex subunit alpha (715 aa).

Positions 1 to 190 (MTTTSAFMLS…KAGLVDDVVP (190 aa)) are enoyl-CoA hydratase. Residues 306–714 (GPLNSVGILG…FWTNGETDQG (409 aa)) form a 3-hydroxyacyl-CoA dehydrogenase region.

In the N-terminal section; belongs to the enoyl-CoA hydratase/isomerase family. It in the central section; belongs to the 3-hydroxyacyl-CoA dehydrogenase family. Heterotetramer of two alpha chains (FadJ) and two beta chains (FadI).

It localises to the cytoplasm. The enzyme catalyses a (3S)-3-hydroxyacyl-CoA = a (2E)-enoyl-CoA + H2O. It carries out the reaction a 4-saturated-(3S)-3-hydroxyacyl-CoA = a (3E)-enoyl-CoA + H2O. The catalysed reaction is a (3S)-3-hydroxyacyl-CoA + NAD(+) = a 3-oxoacyl-CoA + NADH + H(+). It catalyses the reaction (3S)-3-hydroxybutanoyl-CoA = (3R)-3-hydroxybutanoyl-CoA. The protein operates within lipid metabolism; fatty acid beta-oxidation. In terms of biological role, catalyzes the formation of a hydroxyacyl-CoA by addition of water on enoyl-CoA. Also exhibits 3-hydroxyacyl-CoA epimerase and 3-hydroxyacyl-CoA dehydrogenase activities. This Salmonella typhi protein is Fatty acid oxidation complex subunit alpha.